The chain runs to 751 residues: Semaphorin-3C (751 aa).

A signal peptide spans 1–20 (MAFRAICVLVGVFICSICVR). In terms of domain architecture, Sema spans 28–511 (RVYLTFDELR…SNEGVSQVSL (484 aa)). N-linked (GlcNAc...) asparagine glycosylation occurs at Asn81. Cys101 and Cys112 are oxidised to a cystine. Asn123 carries N-linked (GlcNAc...) asparagine glycosylation. Cys130 and Cys139 are joined by a disulfide. N-linked (GlcNAc...) asparagine glycosylation is found at Asn252 and Asn268. Cystine bridges form between Cys266–Cys378 and Cys290–Cys338. Asn465 is a glycosylation site (N-linked (GlcNAc...) asparagine). Cys514 and Cys532 are joined by a disulfide. One can recognise an Ig-like C2-type domain in the interval 571–655 (AYRNAAEIVQ…TENSFKQTIA (85 aa)). N-linked (GlcNAc...) asparagine glycosylation is found at Asn585 and Asn586. An intrachain disulfide couples Cys643 to Cys709.

Belongs to the semaphorin family. In terms of assembly, interacts with PLXND1.

Its subcellular location is the secreted. Its function is as follows. Binds to plexin family members and plays an important role in the regulation of developmental processes. Required for normal cardiovascular development during embryogenesis. Functions as attractant for growing axons, and thereby plays an important role in axon growth and axon guidance. This Mus musculus (Mouse) protein is Semaphorin-3C (Sema3c).